The primary structure comprises 453 residues: Mogroside IIIx synthase (453 aa).

His21 (proton acceptor) is an active-site residue. The active-site Charge relay is the Asp122. 8 residues coordinate UDP-alpha-D-glucose: Ser273, Gln336, Trp354, Asn355, Ser356, Glu359, Asp375, and Gln376.

This sequence belongs to the UDP-glycosyltransferase family. In terms of tissue distribution, highly expressed in mature fruits.

It catalyses the reaction mogroside IIE + UDP-alpha-D-glucose = mogroside IIIX + UDP + H(+). The enzyme catalyses mogroside III + UDP-alpha-D-glucose = mogroside IV + UDP + H(+). It carries out the reaction mogroside III + UDP-alpha-D-glucose = siamenoside I + UDP + H(+). The catalysed reaction is mogroside IV + UDP-alpha-D-glucose = mogroside V + UDP + H(+). Its pathway is secondary metabolite biosynthesis; terpenoid biosynthesis. Its function is as follows. UDP-glycosyltransferase involved in the biosynthesis of cucurbitacin and mogroside tetracyclic triterpene natural products (e.g. siamenoside I and mogrosides IV, V and VI). Cucurbitacins have cytotoxic properties and exhibit deterrent taste as a defense barrier against herbivores. Mogrosides are nonsugar highly oxygenated compounds used as high-intensity zero-calorie sweeteners; they also possess pharmacological properties such as regulating immunity, lowering blood sugar and lipid levels, protecting the liver, and acting as antioxidants and antitumor agents. Catalyzes the branched glucosylations of mogroside II-E, mogroside III and mogroside IV. The polypeptide is Mogroside IIIx synthase (Siraitia grosvenorii (Monk's fruit)).